Consider the following 248-residue polypeptide: Myelin protein P0 (248 aa).

The N-terminal stretch at 1–29 (MAPGAPSSSPSPILAALLFSSLVLSPTLA) is a signal peptide. The Ig-like V-type domain occupies 30 to 143 (IVVYTDREVY…DIVGKTSQVT (114 aa)). Residues 30–153 (IVVYTDREVY…LYVFEKVPTR (124 aa)) lie on the Extracellular side of the membrane. Cys50 and Cys127 are oxidised to a cystine. The N-linked (GlcNAc...) (complex) asparagine glycan is linked to Asn122. A helical membrane pass occupies residues 154–179 (YGVVLGAVIGGILGVVLLLLLLFYLI). The Cytoplasmic portion of the chain corresponds to 180–248 (RYCWLRRQAA…GLGESRKDKK (69 aa)). Ser210 carries the phosphoserine; by PKC modification. The segment at 222–248 (MLDHSRSTKAASEKKSKGLGESRKDKK) is disordered. The span at 224–248 (DHSRSTKAASEKKSKGLGESRKDKK) shows a compositional bias: basic and acidic residues. Ser226 and Ser228 each carry phosphoserine. Ser233 is modified (phosphoserine; by PKC). The residue at position 237 (Ser237) is a Phosphoserine. Ser243 carries the post-translational modification Phosphoserine; by PKC.

The protein belongs to the myelin P0 protein family. Homodimer and homotetramer. In terms of processing, N-glycosylated; contains sulfate-substituted glycan. In terms of tissue distribution, found only in peripheral nervous system Schwann cells.

It is found in the cell membrane. In terms of biological role, is an adhesion molecule necessary for normal myelination in the peripheral nervous system. It mediates adhesion between adjacent myelin wraps and ultimately drives myelin compaction. In Rattus norvegicus (Rat), this protein is Myelin protein P0 (Mpz).